A 194-amino-acid polypeptide reads, in one-letter code: Large ribosomal subunit protein eL15 (194 aa).

Positions Lys-162–His-173 are enriched in basic residues. The segment at Lys-162–Lys-194 is disordered. A compositionally biased stretch (polar residues) spans Ser-185–Lys-194.

The protein belongs to the eukaryotic ribosomal protein eL15 family.

This is Large ribosomal subunit protein eL15 from Methanocorpusculum labreanum (strain ATCC 43576 / DSM 4855 / Z).